We begin with the raw amino-acid sequence, 471 residues long: NALCN channel auxiliary factor 2 (471 aa).

A helical membrane pass occupies residues 47–67 (LASLLFFTVLLADHLWLCAGA). The interval 76 to 115 (SAMRPPWGAGRERQPVPPRAVLPPPPPSPGEPSASSGTCG) is disordered. Pro residues predominate over residues 90–105 (PVPPRAVLPPPPPSPG). Asparagine 120 carries N-linked (GlcNAc...) asparagine glycosylation. Disordered stretches follow at residues 158 to 178 (EPTT…APEF) and 399 to 424 (HYHP…GGSR). A compositionally biased stretch (pro residues) spans 161-171 (TPAPPLRPPDS). A helical transmembrane segment spans residues 432-452 (LCVLVLILLHTVVSFSSSQSG).

The protein belongs to the NALF family.

The protein localises to the membrane. In terms of biological role, probable component of the NALCN channel complex, a channel that regulates the resting membrane potential and controls neuronal excitability. The sequence is that of NALCN channel auxiliary factor 2 (Nalf2) from Mus musculus (Mouse).